The primary structure comprises 402 residues: Major outer membrane porin (402 aa).

The first 22 residues, 1-22 (MKKLLKSALLFAATGSALSLQA), serve as a signal peptide directing secretion.

Belongs to the chlamydial porin (CP) (TC 1.B.2) family. As to quaternary structure, part of a disulfide cross-linked outer membrane complex (COMC) composed of the major outer membrane porin, the small cysteine-rich protein (OmcA) and the large cysteine-rich periplasmic protein (OmcB).

The protein resides in the cell outer membrane. Functionally, in elementary bodies (EBs, the infectious stage, which is able to survive outside the host cell) provides the structural integrity of the outer envelope through disulfide cross-links with the small cysteine-rich protein and the large cysteine-rich periplasmic protein. It has been described in publications as the Sarkosyl-insoluble COMC (Chlamydia outer membrane complex), and serves as the functional equivalent of peptidoglycan. In terms of biological role, permits diffusion of specific solutes through the outer membrane. The chain is Major outer membrane porin (ompA) from Chlamydia psittaci (Chlamydophila psittaci).